The sequence spans 301 residues: MKIAVLSRNPRLYSTRRLVEAGIERGHEMVVIDTLRAYMNIASHKPQIHYRGKPLEGFDAVIPRIGASVTFYGCAVLRQFEMMGVFPLNESVAIARSRDKLRSLQLLSRRGIGLPVTGFAHSPDDIPDLIQMVNGAPLVIKVLEGTQGIGVVLCETATAAESVIEAFMGLKQDIMVQEYIKEAGGADIRCFVVGDKVIASMKRQAKPGEFRSNLHRGGSASLIKITPEERMTALRAAKVMGLSVAGVDILRSNHGPLVMEVNSSPGLEGIEVTTSKDVAGMIIEYLEKNSGPHMTRTKGKG.

In terms of domain architecture, ATP-grasp spans 104–287; that stretch reads LQLLSRRGIG…VAGMIIEYLE (184 aa). Residues Lys141, 178 to 179, Asp187, and 211 to 213 each bind ATP; these read EY and RSN. Residues Asp248, Glu260, and Asn262 each coordinate Mg(2+). Residues Asp248, Glu260, and Asn262 each coordinate Mn(2+).

This sequence belongs to the RimK family. It depends on Mg(2+) as a cofactor. Mn(2+) serves as cofactor.

The protein is Probable alpha-L-glutamate ligase of Pseudomonas savastanoi pv. phaseolicola (strain 1448A / Race 6) (Pseudomonas syringae pv. phaseolicola (strain 1448A / Race 6)).